The chain runs to 337 residues: Lipoyl synthase (337 aa).

Residues Cys-81, Cys-86, Cys-92, Cys-107, Cys-111, Cys-114, and Ser-323 each contribute to the [4Fe-4S] cluster site. The 220-residue stretch at 93 to 312 folds into the Radical SAM core domain; sequence FSHGTATFMI…EDYGNALGFS (220 aa).

This sequence belongs to the radical SAM superfamily. Lipoyl synthase family. [4Fe-4S] cluster serves as cofactor.

It is found in the cytoplasm. It catalyses the reaction [[Fe-S] cluster scaffold protein carrying a second [4Fe-4S](2+) cluster] + N(6)-octanoyl-L-lysyl-[protein] + 2 oxidized [2Fe-2S]-[ferredoxin] + 2 S-adenosyl-L-methionine + 4 H(+) = [[Fe-S] cluster scaffold protein] + N(6)-[(R)-dihydrolipoyl]-L-lysyl-[protein] + 4 Fe(3+) + 2 hydrogen sulfide + 2 5'-deoxyadenosine + 2 L-methionine + 2 reduced [2Fe-2S]-[ferredoxin]. The protein operates within protein modification; protein lipoylation via endogenous pathway; protein N(6)-(lipoyl)lysine from octanoyl-[acyl-carrier-protein]: step 2/2. Functionally, catalyzes the radical-mediated insertion of two sulfur atoms into the C-6 and C-8 positions of the octanoyl moiety bound to the lipoyl domains of lipoate-dependent enzymes, thereby converting the octanoylated domains into lipoylated derivatives. This Xanthomonas axonopodis pv. citri (strain 306) protein is Lipoyl synthase.